A 228-amino-acid polypeptide reads, in one-letter code: Enolase-phosphatase E1 (228 aa).

This sequence belongs to the HAD-like hydrolase superfamily. MasA/MtnC family. As to quaternary structure, monomer. Requires Mg(2+) as cofactor.

It carries out the reaction 5-methylsulfanyl-2,3-dioxopentyl phosphate + H2O = 1,2-dihydroxy-5-(methylsulfanyl)pent-1-en-3-one + phosphate. It participates in amino-acid biosynthesis; L-methionine biosynthesis via salvage pathway; L-methionine from S-methyl-5-thio-alpha-D-ribose 1-phosphate: step 3/6. Its pathway is amino-acid biosynthesis; L-methionine biosynthesis via salvage pathway; L-methionine from S-methyl-5-thio-alpha-D-ribose 1-phosphate: step 4/6. Its function is as follows. Bifunctional enzyme that catalyzes the enolization of 2,3-diketo-5-methylthiopentyl-1-phosphate (DK-MTP-1-P) into the intermediate 2-hydroxy-3-keto-5-methylthiopentenyl-1-phosphate (HK-MTPenyl-1-P), which is then dephosphorylated to form the acireductone 1,2-dihydroxy-3-keto-5-methylthiopentene (DHK-MTPene). The protein is Enolase-phosphatase E1 of Picosynechococcus sp. (strain ATCC 27264 / PCC 7002 / PR-6) (Agmenellum quadruplicatum).